Here is a 133-residue protein sequence, read N- to C-terminus: MKTGYLWAIASALLVTVAQLLLKIGMSELPDLQLEKQWFDLHWLWANIIPISVVFVGLIGYVLSMVCWLLTLRTIPLNKAYPLISLSYVFVYILAVVLPWFQETLSWSKTIGIIFIMLGVWLISQKTEQTTSH.

Over 1–5 (MKTGY) the chain is Cytoplasmic. The chain crosses the membrane as a helical span at residues 6-26 (LWAIASALLVTVAQLLLKIGM). Topologically, residues 27 to 47 (SELPDLQLEKQWFDLHWLWAN) are periplasmic. The chain crosses the membrane as a helical span at residues 48 to 68 (IIPISVVFVGLIGYVLSMVCW). The EamA domain occupies 51–125 (ISVVFVGLIG…IMLGVWLISQ (75 aa)). Over 69-80 (LLTLRTIPLNKA) the chain is Cytoplasmic. Residues 81–101 (YPLISLSYVFVYILAVVLPWF) form a helical membrane-spanning segment. Residues 102 to 103 (QE) lie on the Periplasmic side of the membrane. A helical transmembrane segment spans residues 104-124 (TLSWSKTIGIIFIMLGVWLIS). The Cytoplasmic segment spans residues 125 to 133 (QKTEQTTSH).

Belongs to the ArnF family. As to quaternary structure, heterodimer of ArnE and ArnF.

It is found in the cell inner membrane. It functions in the pathway bacterial outer membrane biogenesis; lipopolysaccharide biosynthesis. Its function is as follows. Translocates 4-amino-4-deoxy-L-arabinose-phosphoundecaprenol (alpha-L-Ara4N-phosphoundecaprenol) from the cytoplasmic to the periplasmic side of the inner membrane. The chain is Probable 4-amino-4-deoxy-L-arabinose-phosphoundecaprenol flippase subunit ArnF from Proteus mirabilis (strain HI4320).